Consider the following 579-residue polypeptide: UvrABC system protein C (579 aa).

The GIY-YIG domain maps to 12–89; that stretch reads DATGVYIFRD…IKRYRPPYNV (78 aa). The region spanning 193-228 is the UVR domain; that stretch reads QEVIEVLEEEMKEASERLEFERAARIRDQIESIREV.

It belongs to the UvrC family. Interacts with UvrB in an incision complex.

Its subcellular location is the cytoplasm. In terms of biological role, the UvrABC repair system catalyzes the recognition and processing of DNA lesions. UvrC both incises the 5' and 3' sides of the lesion. The N-terminal half is responsible for the 3' incision and the C-terminal half is responsible for the 5' incision. This Methanothermobacter thermautotrophicus (strain ATCC 29096 / DSM 1053 / JCM 10044 / NBRC 100330 / Delta H) (Methanobacterium thermoautotrophicum) protein is UvrABC system protein C.